We begin with the raw amino-acid sequence, 420 residues long: Pyruvate dehydrogenase E1 component subunit alpha, mitochondrial (420 aa).

The N-terminal 33 residues, Met1–Met33, are a transit peptide targeting the mitochondrion. Pyruvate-binding residues include His112, Tyr138, Arg139, Ala177, Gly185, Val187, Asp216, Gly217, Ala218, Asn245, and Tyr247. Residues Tyr138 and Arg139 each contribute to the thiamine diphosphate site. Residues Gly185, Val187, Asp216, Gly217, Ala218, and Asn245 each coordinate thiamine diphosphate. Asp216 serves as a coordination point for Mg(2+). The Mg(2+) site is built by Asn245 and Tyr247. His312 contacts thiamine diphosphate. Position 313 is a phosphoserine; by PDK1 and PDK2 (Ser313).

In terms of assembly, pyruvate dehydrogenase (E1) is a tetramer of 2 alpha and 2 beta subunits. Eukaryotic pyruvate dehydrogenase (PDH) complexes are organized as a core consisting of the oligomeric dihydrolipoamide acetyl-transferase (E2), around which are arranged multiple copies of pyruvate dehydrogenase (E1), dihydrolipoamide dehydrogenase (E3) and protein X (E3BP) bound by non-covalent bonds. Thiamine diphosphate is required as a cofactor. The cofactor is Mg(2+). Phosphorylated at Ser-313 by pyruvate dehydrogenase kinases PKP1 (PDK1) and PKP2 (PDK2), and dephosphorylated by pyruvate dehydrogenase phosphatases PTC5 and PTC6.

It is found in the mitochondrion matrix. It carries out the reaction N(6)-[(R)-lipoyl]-L-lysyl-[protein] + pyruvate + H(+) = N(6)-[(R)-S(8)-acetyldihydrolipoyl]-L-lysyl-[protein] + CO2. Its activity is regulated as follows. E1 activity is regulated by phosphorylation (inactivation) and dephosphorylation (activation) of the alpha subunit. Its function is as follows. The pyruvate dehydrogenase complex catalyzes the overall conversion of pyruvate to acetyl-CoA and CO(2). The polypeptide is Pyruvate dehydrogenase E1 component subunit alpha, mitochondrial (PDA1) (Saccharomyces cerevisiae (strain ATCC 204508 / S288c) (Baker's yeast)).